The chain runs to 160 residues: General odorant-binding protein 2 (160 aa).

A signal peptide spans Met-1–Gly-19. 3 disulfides stabilise this stretch: Cys-38/Cys-73, Cys-69/Cys-127, and Cys-116/Cys-136.

It belongs to the PBP/GOBP family. Antenna.

In terms of biological role, present in the aqueous fluid surrounding olfactory sensory dendrites and are thought to aid in the capture and transport of hydrophobic odorants into and through this fluid. The sequence is that of General odorant-binding protein 2 from Antheraea pernyi (Chinese oak silk moth).